Reading from the N-terminus, the 267-residue chain is Meiosis-specific protein ISC10 (267 aa).

The segment covering 1 to 13 (MDVDERLHQDENQ) has biased composition (basic and acidic residues). The interval 1–26 (MDVDERLHQDENQTHPFSQKKSSSFL) is disordered. The span at 14 to 25 (THPFSQKKSSSF) shows a compositional bias: polar residues.

Its function is as follows. Indispensable for spore formation. This chain is Meiosis-specific protein ISC10 (ISC10), found in Saccharomyces cerevisiae (strain ATCC 204508 / S288c) (Baker's yeast).